Here is a 149-residue protein sequence, read N- to C-terminus: uncharacterized protein (149 aa).

Positions 1 to 15 are enriched in basic and acidic residues; it reads MQRQTGHMEDKKRTG. Residues 1-32 are disordered; the sequence is MQRQTGHMEDKKRTGLESQGTENAFSDGRDGK.

This is an uncharacterized protein from Gallus gallus (Chicken).